The primary structure comprises 187 residues: Interferon beta (187 aa).

The signal sequence occupies residues 1–21 (MTNKCLLQIALLLCFSTTALS). Phosphotyrosine is present on Y24. The cysteines at positions 52 and 162 are disulfide-linked. An N-linked (GlcNAc...) asparagine glycan is attached at N101.

This sequence belongs to the alpha/beta interferon family. Monomer.

It is found in the secreted. Functionally, type I interferon cytokine that plays a key role in the innate immune response to infection, developing tumors and other inflammatory stimuli. Signals via binding to high-affinity (IFNAR2) and low-affinity (IFNAR1) heterodimeric receptor, activating the canonical Jak-STAT signaling pathway resulting in transcriptional activation or repression of interferon-regulated genes that encode the effectors of the interferon response, such as antiviral proteins, regulators of cell proliferation and differentiation, and immunoregulatory proteins. Signals mostly via binding to a IFNAR1-IFNAR2 heterodimeric receptor, but can also function with IFNAR1 alone and independently of Jak-STAT pathways. Elicits a wide variety of responses, including antiviral and antibacterial activities, and can regulate the development of B-cells, myelopoiesis and lipopolysaccharide (LPS)-inducible production of tumor necrosis factor. Plays a role in neuronal homeostasis by regulating dopamine turnover and protecting dopaminergic neurons: acts by promoting neuronal autophagy and alpha-synuclein clearance, thereby preventing dopaminergic neuron loss. IFNB1 is more potent than interferon-alpha (IFN-alpha) in inducing the apoptotic and antiproliferative pathways required for control of tumor cell growth. This Macaca fascicularis (Crab-eating macaque) protein is Interferon beta (IFNB1).